The sequence spans 300 residues: Probable alpha-L-glutamate ligase (300 aa).

The region spanning 104–287 (LQLLARQGID…IASRMIAWIE (184 aa)) is the ATP-grasp domain. ATP contacts are provided by residues Lys-141, 178–179 (EY), Asp-187, and 211–213 (RSN). Positions 248, 260, and 262 each coordinate Mg(2+). Mn(2+)-binding residues include Asp-248, Glu-260, and Asn-262.

Belongs to the RimK family. Mg(2+) serves as cofactor. It depends on Mn(2+) as a cofactor.

The protein is Probable alpha-L-glutamate ligase of Klebsiella pneumoniae (strain 342).